The chain runs to 450 residues: UDP-N-acetylmuramoylalanine--D-glutamate ligase (450 aa).

ATP is bound at residue 119–125 (GSNGKTT).

This sequence belongs to the MurCDEF family.

The protein resides in the cytoplasm. It carries out the reaction UDP-N-acetyl-alpha-D-muramoyl-L-alanine + D-glutamate + ATP = UDP-N-acetyl-alpha-D-muramoyl-L-alanyl-D-glutamate + ADP + phosphate + H(+). The protein operates within cell wall biogenesis; peptidoglycan biosynthesis. Its function is as follows. Cell wall formation. Catalyzes the addition of glutamate to the nucleotide precursor UDP-N-acetylmuramoyl-L-alanine (UMA). The protein is UDP-N-acetylmuramoylalanine--D-glutamate ligase of Bacillus anthracis (strain A0248).